The primary structure comprises 94 residues: DNA-directed RNA polymerase subunit Rpo11 (94 aa).

It belongs to the archaeal Rpo11/eukaryotic RPB11/RPC19 RNA polymerase subunit family. In terms of assembly, part of the RNA polymerase complex.

Its subcellular location is the cytoplasm. The enzyme catalyses RNA(n) + a ribonucleoside 5'-triphosphate = RNA(n+1) + diphosphate. DNA-dependent RNA polymerase (RNAP) catalyzes the transcription of DNA into RNA using the four ribonucleoside triphosphates as substrates. The protein is DNA-directed RNA polymerase subunit Rpo11 of Haloarcula marismortui (strain ATCC 43049 / DSM 3752 / JCM 8966 / VKM B-1809) (Halobacterium marismortui).